Consider the following 390-residue polypeptide: tRNA-specific 2-thiouridylase MnmA (390 aa).

ATP contacts are provided by residues 29–36 and L55; that span reads GLSGGVDS. C116 acts as the Nucleophile in catalysis. Cysteines 116 and 225 form a disulfide. G141 serves as a coordination point for ATP. Positions 175–177 are interaction with tRNA; the sequence is KDQ. Catalysis depends on C225, which acts as the Cysteine persulfide intermediate. An interaction with tRNA region spans residues 330–331; that stretch reads RY.

The protein belongs to the MnmA/TRMU family.

It is found in the cytoplasm. The enzyme catalyses S-sulfanyl-L-cysteinyl-[protein] + uridine(34) in tRNA + AH2 + ATP = 2-thiouridine(34) in tRNA + L-cysteinyl-[protein] + A + AMP + diphosphate + H(+). In terms of biological role, catalyzes the 2-thiolation of uridine at the wobble position (U34) of tRNA, leading to the formation of s(2)U34. The sequence is that of tRNA-specific 2-thiouridylase MnmA from Prochlorococcus marinus (strain MIT 9515).